The chain runs to 173 residues: Bacterial deubiquitinase-like protein BilC (173 aa).

Positions 103, 105, and 115 each coordinate Zn(2+).

It belongs to the M67B family. Zn(2+) serves as cofactor.

Its function is as follows. Component of the Bil (bacterial ISG15-like) antiviral defense system, composed of BilA, BilB, BilC and BilD. The Bil system specifically conjugates a ubiquitin-like moiety (bilA) to the bacteriophage central tail fiber (CTF, or tip attachment protein J) via reactions involving E1 (bilD) and E2 (bilB). Modifies CTF of phage SECphi27 and SECphi4, which probably interferes with assembly of the phage tail. Also modifies T5 baseplate hub protein pb3 (gene D16), but not gp27 of phage T6 (Bil defends against T6). BilC is a probable metalloprotease that may cleave non-specifically conjugated targets. Bil-encoding bacteria produce mostly defective phage SECphi27, many of which have phage assembly defects, including no tails. SECphi27 phage progeny produced in E.coli with the Bil system inject less DNA into naive host cells, maybe because the phage are less able to adsorb and inject their DNA into host cells. In terms of biological role, expression of the Bil system in E.coli (strain MG1655) confers about 100-fold resistance to phage SECphi27, SECphi18, SECphi6, SECphi4 and T5, but not to SECphi17. When cells expressing the Bil system are infected by phage SECphi27 at low multiplicity of infection (0.03 MOI) the culture survives, at 3.0 MOI the culture collapses at the same time as cells without the Bil system. Functionally, cleaves a ubiquitin-GFP (Ubl-GFP) fusion protein in vivo. The protein is Bacterial deubiquitinase-like protein BilC of Collimonas sp. (strain OK412).